A 544-amino-acid chain; its full sequence is Lipid II flippase MurJ (544 aa).

14 helical membrane passes run 21–41 (ILGMVYLIPFSIMVGATGGAL), 49–69 (YTLFLNIATMGFPAAVSKFVS), 90–110 (VMLVTGMIAFFILYLSAPMFA), 127–147 (VVYVIRMVSLALLVVPIMSLV), 169–189 (IVRIIFLLSATFLILKVFNGG), 191–211 (VIAVGYATFAALIGAFGGLVV), 241–261 (MFFELFSYAAPYVFVGLAIPL), 297–317 (LVMIPVSLATAFGLTLIPTIT), 338–358 (TILFLIIPAVVGISLLSGPTY), 375–395 (ILLWYSPVAILFSLFTVNAAI), 404–424 (FAVVSLVIGVVIKLVLNVPLI), 431–451 (GAILATALGYIASLLYGFIMI), 471–491 (VLSAIMGIAVKIVQWVLGFFI), and 500–520 (AAIVVVIAAAVGGAVYLYCGY).

It belongs to the polysaccharide synthase family.

It localises to the cell membrane. It participates in cell wall biogenesis; peptidoglycan biosynthesis. Its function is as follows. Involved in peptidoglycan biosynthesis. Transports lipid-linked peptidoglycan precursors from the inner to the outer leaflet of the cytoplasmic membrane. Not essential for growth. The chain is Lipid II flippase MurJ from Bacillus subtilis (strain 168).